Reading from the N-terminus, the 241-residue chain is Phosphoadenosine 5'-phosphosulfate reductase (241 aa).

Cysteine 235 (nucleophile; cysteine thiosulfonate intermediate) is an active-site residue.

Belongs to the PAPS reductase family. CysH subfamily.

Its subcellular location is the cytoplasm. It catalyses the reaction [thioredoxin]-disulfide + sulfite + adenosine 3',5'-bisphosphate + 2 H(+) = [thioredoxin]-dithiol + 3'-phosphoadenylyl sulfate. It functions in the pathway sulfur metabolism; hydrogen sulfide biosynthesis; sulfite from sulfate: step 3/3. Catalyzes the formation of sulfite from phosphoadenosine 5'-phosphosulfate (PAPS) using thioredoxin as an electron donor. The chain is Phosphoadenosine 5'-phosphosulfate reductase from Xanthomonas euvesicatoria pv. vesicatoria (strain 85-10) (Xanthomonas campestris pv. vesicatoria).